Consider the following 260-residue polypeptide: UPF0246 protein SCO2297 (260 aa).

Belongs to the UPF0246 family.

In Streptomyces coelicolor (strain ATCC BAA-471 / A3(2) / M145), this protein is UPF0246 protein SCO2297.